We begin with the raw amino-acid sequence, 296 residues long: GTPase Era (296 aa).

The region spanning 7–174 (HCGFVAIVGR…LDQVRPHLPE (168 aa)) is the Era-type G domain. The tract at residues 15–22 (GRPNVGKS) is G1. 15–22 (GRPNVGKS) is a binding site for GTP. The interval 41–45 (QTTRH) is G2. Residues 62–65 (DTPG) form a G3 region. Residues 62–66 (DTPGF) and 123–126 (NKLD) contribute to the GTP site. The segment at 123-126 (NKLD) is G4. A G5 region spans residues 153–155 (VSA). The KH type-2 domain occupies 205 to 281 (LGEELPYEMN…FLQVWVKVKS (77 aa)).

Belongs to the TRAFAC class TrmE-Era-EngA-EngB-Septin-like GTPase superfamily. Era GTPase family. In terms of assembly, monomer.

The protein localises to the cytoplasm. It localises to the cell inner membrane. An essential GTPase that binds both GDP and GTP, with rapid nucleotide exchange. Plays a role in 16S rRNA processing and 30S ribosomal subunit biogenesis and possibly also in cell cycle regulation and energy metabolism. This chain is GTPase Era, found in Chromobacterium violaceum (strain ATCC 12472 / DSM 30191 / JCM 1249 / CCUG 213 / NBRC 12614 / NCIMB 9131 / NCTC 9757 / MK).